A 157-amino-acid chain; its full sequence is Glutathione peroxidase homolog BsaA (157 aa).

The active site involves Cys35.

This sequence belongs to the glutathione peroxidase family.

The sequence is that of Glutathione peroxidase homolog BsaA (bsaA) from Halalkalibacterium halodurans (strain ATCC BAA-125 / DSM 18197 / FERM 7344 / JCM 9153 / C-125) (Bacillus halodurans).